Reading from the N-terminus, the 445-residue chain is Inward rectifier potassium channel 4 (445 aa).

Over 1-55 (MHGHNRNGQAHVPRRKRRNRFVKKNGQCNVYFANLSNKSQRYMADIFTTCVDTRW) the chain is Cytoplasmic. The helical transmembrane segment at 56-80 (RYMLMIFSAAFLVSWLFFGLLFWWI) threads the bilayer. Over 81–119 (AFFHGDLEASPSVPAVGGPGGNGGESPNAPKPCIMHVNG) the chain is Extracellular. Residues 120–131 (FLGAFLFSVETQ) constitute an intramembrane region (helical; Pore-forming). An intramembrane region (pore-forming) is located at residues 132–138 (TTIGYGF). Positions 133 to 138 (TIGYGF) match the Selectivity filter motif. Residues 139–147 (RCVTEECPL) lie on the Extracellular side of the membrane. Residues 148–169 (AVIAVVVQSIVGCVIDSFMIGT) traverse the membrane as a helical segment. At 170–445 (IMAKMARPKK…NISYRRESRI (276 aa)) the chain is on the cytoplasmic side. The PDZ-binding motif lies at 443–445 (SRI).

Belongs to the inward rectifier-type potassium channel (TC 1.A.2.1) family. KCNJ4 subfamily. Homomultimeric and heteromultimeric association with KCNJ2 and KCNJ12. Interacts with DLG2 and DLG4. Associates, via its PDZ-recognition domain, with a complex containing LIN7A, LIN7B, LIN7C, DLG1, CASK and APBA1. Interacts with TAX1BP3. TAX1BP3 competes with LIN7 family members for KCNJ4 binding. In terms of tissue distribution, highly expressed in the forebrain, moderately in skeletal muscle. Im olfactory bulb, specifically expressed at the postsynaptic membrane of dendritic spines of granule cells.

It localises to the cell membrane. It is found in the postsynaptic cell membrane. The protein resides in the cytoplasmic vesicle membrane. The catalysed reaction is K(+)(in) = K(+)(out). Inward rectifier potassium channels are characterized by a greater tendency to allow potassium to flow into the cell rather than out of it. Their voltage dependence is regulated by the concentration of extracellular potassium; as external potassium is raised, the voltage range of the channel opening shifts to more positive voltages. The inward rectification is mainly due to the blockage of outward current by internal magnesium. Can be blocked by extracellular barium and cesium. This is Inward rectifier potassium channel 4 (Kcnj4) from Mus musculus (Mouse).